A 558-amino-acid chain; its full sequence is Glucose-6-phosphate isomerase (558 aa).

E362 acts as the Proton donor in catalysis. Residues H393 and K523 contribute to the active site.

It belongs to the GPI family.

The protein localises to the cytoplasm. The enzyme catalyses alpha-D-glucose 6-phosphate = beta-D-fructose 6-phosphate. It functions in the pathway carbohydrate degradation; glycolysis; D-glyceraldehyde 3-phosphate and glycerone phosphate from D-glucose: step 2/4. This chain is Glucose-6-phosphate isomerase (Pgi), found in Drosophila yakuba (Fruit fly).